The chain runs to 276 residues: UPF0276 protein CV_3513 (276 aa).

Belongs to the UPF0276 family.

The chain is UPF0276 protein CV_3513 from Chromobacterium violaceum (strain ATCC 12472 / DSM 30191 / JCM 1249 / CCUG 213 / NBRC 12614 / NCIMB 9131 / NCTC 9757 / MK).